Here is a 666-residue protein sequence, read N- to C-terminus: Calpain-10 (666 aa).

A Calpain catalytic domain is found at 13–321 (LFRDAAFPAS…FDEVTIGYPV (309 aa)). Catalysis depends on residues C73, H238, and N263. 2 domain III regions span residues 322–488 (TEAG…ISLS) and 507–648 (EWET…IHSQ).

Belongs to the peptidase C2 family.

Its function is as follows. Calcium-regulated non-lysosomal thiol-protease which catalyzes limited proteolysis of substrates involved in cytoskeletal remodeling and signal transduction. May play a role in insulin-stimulated glucose uptake. This Mus musculus (Mouse) protein is Calpain-10 (Capn10).